Consider the following 453-residue polypeptide: Probable exopolygalacturonase B (453 aa).

An N-terminal signal peptide occupies residues 1–16; sequence MKFFALAALFASTVNS. Residues N185 and N225 are each glycosylated (N-linked (GlcNAc...) asparagine). D255 acts as the Proton donor in catalysis. C257 and C274 form a disulfide bridge. 2 N-linked (GlcNAc...) asparagine glycosylation sites follow: N263 and N275. Residue H278 is part of the active site. 2 PbH1 repeats span residues 295-316 and 327-348; these read IENVWIENVTLLNGENGARLKA and INNVTYKNIHVENTDNPIVLDQ. Residues N302, N329, N354, and N366 are each glycosylated (N-linked (GlcNAc...) asparagine). The stretch at 362–405 is one PbH1 3 repeat; sequence PSRVNFTNIVFEDIYGTSSGKRGKVVADLTCSPNAVCSGIRLKN. C392 and C398 are oxidised to a cystine. N-linked (GlcNAc...) asparagine glycosylation occurs at N436.

This sequence belongs to the glycosyl hydrolase 28 family.

The protein localises to the secreted. The catalysed reaction is [(1-&gt;4)-alpha-D-galacturonosyl](n) + H2O = alpha-D-galacturonate + [(1-&gt;4)-alpha-D-galacturonosyl](n-1). Its function is as follows. Specific in hydrolyzing the terminal glycosidic bond of polygalacturonic acid and oligogalacturonates. In Aspergillus fumigatus (strain ATCC MYA-4609 / CBS 101355 / FGSC A1100 / Af293) (Neosartorya fumigata), this protein is Probable exopolygalacturonase B (pgxB).